The sequence spans 337 residues: Fructose-1,6-bisphosphatase class 1 (337 aa).

Glu-89, Asp-112, Leu-114, and Asp-115 together coordinate Mg(2+). Residues 115 to 118, Asn-208, Tyr-241, and Lys-271 each bind substrate; that span reads DGSS. Glu-277 contacts Mg(2+).

This sequence belongs to the FBPase class 1 family. In terms of assembly, homotetramer. It depends on Mg(2+) as a cofactor.

The protein resides in the cytoplasm. The catalysed reaction is beta-D-fructose 1,6-bisphosphate + H2O = beta-D-fructose 6-phosphate + phosphate. It participates in carbohydrate biosynthesis; gluconeogenesis. In Yersinia pestis bv. Antiqua (strain Antiqua), this protein is Fructose-1,6-bisphosphatase class 1.